A 239-amino-acid polypeptide reads, in one-letter code: Fatty acid metabolism regulator protein (239 aa).

Residues 6–74 enclose the HTH gntR-type domain; it reads KGPASFAEKY…HGKPTRVNNF (69 aa). A DNA-binding region (H-T-H motif) is located at residues 34–53; the sequence is ERELSELIGVTRTTLREVLQ.

Homodimer.

Its subcellular location is the cytoplasm. Its function is as follows. Multifunctional regulator of fatty acid metabolism. The protein is Fatty acid metabolism regulator protein of Shewanella pealeana (strain ATCC 700345 / ANG-SQ1).